Reading from the N-terminus, the 671-residue chain is Vinexin (671 aa).

Gln2 is modified (N-acetylalanine). Phosphoserine is present on Arg6. Disordered regions lie at residues 46 to 111 (LNFQ…TKDS), 166 to 215 (TFEE…RPGA), 249 to 268 (LETG…EKPS), 295 to 324 (TRLP…AWSS), and 337 to 383 (SLSP…KKRK). Polar residues predominate over residues 88–108 (PSASTKIPASQHTQNWSATWT). A SoHo domain is found at 115 to 187 (DKRWVKYEGI…GAQQRPAHRP (73 aa)). Ser348 carries the phosphoserine modification. Polar residues predominate over residues 359–368 (PSSTRDPSAS). SH3 domains follow at residues 380–439 (KKRK…VLPA) and 454–515 (LEYG…VSRE). The interval 380–515 (KKRKAARLKF…PASYVQVSRE (136 aa)) is binds to vinculin. Phosphoserine is present on Ser395. The interval 519 to 611 (RLCDDGPQLP…LGTSSPNTSQ (93 aa)) is disordered. At Ser530 the chain carries Phosphoserine; by MAPK1. Positions 535 to 553 (AAARSARHPSSPSALRSPA) are enriched in low complexity. 5 positions are modified to phosphoserine: Ser544, Ser545, Ser547, Ser551, and Ser563. Residues 560 to 584 (GQTSPRRTGFSFPTQEPRPQTQNLG) show a composition bias toward polar residues. The SH3 3 domain maps to 612 to 671 (IHWTPYRAMYQYRPQNEDELELREGDRVDVMQQCDDGWFVGVSRRTQKFGTFPGNYVAPV). Residues 612–671 (IHWTPYRAMYQYRPQNEDELELREGDRVDVMQQCDDGWFVGVSRRTQKFGTFPGNYVAPV) are binds to SOS.

In terms of assembly, interacts with DLG5 through its third SH3 domain. Interacts with vinculin by the first two SH3 domains and the proline rich region of vinculin. Binds to SOS (guanine nucleotide exchange factor of RAS and RAC), through its third SH3 domain. The formation of this complex is down-regulated by phosphorylation of SOS. Interacts with INPPL1/SHIP2, SAFB2, SOCS7 and SRCIN1. Interacts with FASLG. Interacts with MAPK1/ERK2. In terms of processing, phosphorylated at Ser-530 by MAPK1/ERK2 during cell spreading. In terms of tissue distribution, both isoforms are expressed in different tissues like heart, placenta, brain, skeletal muscle and pancreas. Isoform beta is especially found in liver.

The protein resides in the cell junction. It is found in the cytoplasm. The protein localises to the cytoskeleton. Its subcellular location is the nucleus. Functionally, vinexin alpha isoform promotes up-regulation of actin stress fiber formation. Vinexin beta isoform plays a role in cell spreading and enhances the activation of JNK/SAPK in response to EGF stimulation by using its third SH3 domain. This Homo sapiens (Human) protein is Vinexin (SORBS3).